The following is a 228-amino-acid chain: MSPSCSSCVNVLLIMCLMLLSLSADAYKNYTVGESTGWFDIQERPSANYQKWADSKSFSLGDFLIFNTDSNHSVVQTYDFKTYKDCDYDNNENNDTTEWSAANPSATSPVPVSISVPLVKEGSNYFFSGNYDGEQCKFGQHFMINVTHGQGLPDSSSPDDAAAPGPSESSQSGDDEVAPDTIVPANFDHPKDIESADDDKEVHSKKSSSSTTKTSLFCFVFMGLFASF.

The N-terminal stretch at 1-26 (MSPSCSSCVNVLLIMCLMLLSLSADA) is a signal peptide. A Phytocyanin domain is found at 28 to 148 (KNYTVGESTG…GQHFMINVTH (121 aa)). N-linked (GlcNAc...) asparagine glycosylation is found at Asn-29, Asn-71, Asn-94, and Asn-145. Cys-86 and Cys-136 are oxidised to a cystine. A disordered region spans residues 148–211 (HGQGLPDSSS…VHSKKSSSST (64 aa)). Positions 153–170 (PDSSSPDDAAAPGPSESS) are enriched in low complexity. A compositionally biased stretch (basic and acidic residues) spans 188–204 (DHPKDIESADDDKEVHS). Ser-204 carries GPI-anchor amidated serine lipidation. Positions 205–228 (KKSSSSTTKTSLFCFVFMGLFASF) are cleaved as a propeptide — removed in mature form.

The protein belongs to the early nodulin-like (ENODL) family. Mostly expressed in seedlings, roots and flowers, and, to a lower extent, in leaves, stems and seeds.

The protein localises to the cell membrane. May act as a carbohydrate transporter. The protein is Early nodulin-like protein 18 of Arabidopsis thaliana (Mouse-ear cress).